The sequence spans 251 residues: Malonyl-[acyl-carrier protein] O-methyltransferase (251 aa).

It belongs to the methyltransferase superfamily.

It catalyses the reaction malonyl-[ACP] + S-adenosyl-L-methionine = malonyl-[ACP] methyl ester + S-adenosyl-L-homocysteine. It participates in cofactor biosynthesis; biotin biosynthesis. Converts the free carboxyl group of a malonyl-thioester to its methyl ester by transfer of a methyl group from S-adenosyl-L-methionine (SAM). It allows to synthesize pimeloyl-ACP via the fatty acid synthetic pathway. This chain is Malonyl-[acyl-carrier protein] O-methyltransferase, found in Pseudescherichia vulneris (Escherichia vulneris).